Here is a 219-residue protein sequence, read N- to C-terminus: 2-hydroxy-3-keto-5-methylthiopentenyl-1-phosphate phosphatase (219 aa).

It belongs to the HAD-like hydrolase superfamily. MtnX family.

The catalysed reaction is 2-hydroxy-5-methylsulfanyl-3-oxopent-1-enyl phosphate + H2O = 1,2-dihydroxy-5-(methylsulfanyl)pent-1-en-3-one + phosphate. Its pathway is amino-acid biosynthesis; L-methionine biosynthesis via salvage pathway; L-methionine from S-methyl-5-thio-alpha-D-ribose 1-phosphate: step 4/6. Its function is as follows. Dephosphorylates 2-hydroxy-3-keto-5-methylthiopentenyl-1-phosphate (HK-MTPenyl-1-P) yielding 1,2-dihydroxy-3-keto-5-methylthiopentene (DHK-MTPene). This Bacillus cereus (strain 03BB102) protein is 2-hydroxy-3-keto-5-methylthiopentenyl-1-phosphate phosphatase.